Reading from the N-terminus, the 191-residue chain is Protein Ves (191 aa).

The protein belongs to the Ves family.

The protein is Protein Ves of Escherichia coli (strain SMS-3-5 / SECEC).